A 70-amino-acid polypeptide reads, in one-letter code: Antimicrobial peptide VpCT1 (70 aa).

Positions 1 to 23 (MKNQFAVLLVALVLLQLFSQSEA) are cleaved as a signal peptide. Residue Leu-36 is modified to Leucine amide. Residues 37–70 (GKRGLRNFDLEQMDDTYEPELSEADLRYLQDLLR) constitute a propeptide that is removed on maturation.

It belongs to the non-disulfide-bridged peptide (NDBP) superfamily. Short antimicrobial peptide (group 4) family. As to expression, expressed by the venom gland.

It is found in the secreted. Its subcellular location is the target cell membrane. Its function is as follows. Antimicrobial peptide with potent activity against bacteria S.aureus (MIC=4.7 uM) and E.coli (MIC=31.5 uM), and pathogenic yeasts C.albicans (MIC=25 uM) and C.glabrata (MIC=12.5 uM). Is not very effective against P.aeruginosa (MIC=150 and &gt;300 uM). Also provokes moderate hemolysis on human erythrocytes (HC(50)=10.5 uM). The sequence is that of Antimicrobial peptide VpCT1 from Mesomexovis punctatus (Scorpion).